A 1221-amino-acid polypeptide reads, in one-letter code: DNA-directed RNA polymerase subunit beta' (1221 aa).

Residues cysteine 60, cysteine 62, cysteine 75, and cysteine 78 each contribute to the Zn(2+) site. Residues aspartate 449, aspartate 451, and aspartate 453 each contribute to the Mg(2+) site. The Zn(2+) site is built by cysteine 820, cysteine 894, cysteine 901, and cysteine 904.

This sequence belongs to the RNA polymerase beta' chain family. The RNAP catalytic core consists of 2 alpha, 1 beta, 1 beta' and 1 omega subunit. When a sigma factor is associated with the core the holoenzyme is formed, which can initiate transcription. Mg(2+) is required as a cofactor. Requires Zn(2+) as cofactor.

It catalyses the reaction RNA(n) + a ribonucleoside 5'-triphosphate = RNA(n+1) + diphosphate. Functionally, DNA-dependent RNA polymerase catalyzes the transcription of DNA into RNA using the four ribonucleoside triphosphates as substrates. The chain is DNA-directed RNA polymerase subunit beta' from Ligilactobacillus salivarius (strain UCC118) (Lactobacillus salivarius).